The primary structure comprises 122 residues: EPIDERMAL PATTERNING FACTOR-like protein 1 (122 aa).

The signal sequence occupies residues 1–26; it reads MFAIYKSTLLLLPLILILLITPQVSS. 3 cysteine pairs are disulfide-bonded: cysteine 55–cysteine 113, cysteine 59–cysteine 65, and cysteine 62–cysteine 115.

Belongs to the plant cysteine rich small secretory peptide family. Epidermal patterning factor subfamily.

The protein localises to the secreted. Its function is as follows. Controls stomatal patterning. This is EPIDERMAL PATTERNING FACTOR-like protein 1 from Arabidopsis thaliana (Mouse-ear cress).